Consider the following 124-residue polypeptide: MaFF-interacting protein (124 aa).

Residues 54-96 (LVSEVEELYKSITALREKLLQAEQSLRNLKDIHMSLEKDVTAM) adopt a coiled-coil conformation.

The protein belongs to the tektin family. In terms of assembly, interacts with MIS18A. Interacts (via its coiled-coil region) with MAFF. As to expression, strongly expressed in brain, kidney and ovary. Moderately expressed in liver, spleen, thymus, prostate, testis, small intestine and colon. Weakly expressed in heart, placenta, lung and leukocytes.

It is found in the cytoplasm. Its subcellular location is the nucleus. The protein localises to the nucleolus. Its function is as follows. Acts as a coactivator of MAFF transcriptional activity. Inhibits cell growth and colony-forming efficiency. This Homo sapiens (Human) protein is MaFF-interacting protein (MAFIP).